Here is a 157-residue protein sequence, read N- to C-terminus: UPF0251 protein CLM_1546 (157 aa).

This sequence belongs to the UPF0251 family.

This chain is UPF0251 protein CLM_1546, found in Clostridium botulinum (strain Kyoto / Type A2).